The sequence spans 266 residues: Undecaprenyl-diphosphatase (266 aa).

7 helical membrane-spanning segments follow: residues asparagine 41–tryptophan 61, tyrosine 82–aspartate 102, alanine 106–leucine 126, isoleucine 140–leucine 160, leucine 180–glycine 200, isoleucine 213–cysteine 233, and leucine 245–leucine 265.

The protein belongs to the UppP family.

Its subcellular location is the cell inner membrane. The catalysed reaction is di-trans,octa-cis-undecaprenyl diphosphate + H2O = di-trans,octa-cis-undecaprenyl phosphate + phosphate + H(+). In terms of biological role, catalyzes the dephosphorylation of undecaprenyl diphosphate (UPP). Confers resistance to bacitracin. The chain is Undecaprenyl-diphosphatase from Bacteroides fragilis (strain ATCC 25285 / DSM 2151 / CCUG 4856 / JCM 11019 / LMG 10263 / NCTC 9343 / Onslow / VPI 2553 / EN-2).